We begin with the raw amino-acid sequence, 152 residues long: Ferredoxin-thioredoxin reductase catalytic chain, chloroplastic (152 aa).

The transit peptide at Met-1–Gly-38 directs the protein to the chloroplast. Cys-91 contacts [4Fe-4S] cluster. Catalysis depends on Cys-93, which acts as the Nucleophile. Cys-93 and Cys-123 form a disulfide bridge. Residues Cys-110, Cys-112, and Cys-121 each coordinate [4Fe-4S] cluster.

Belongs to the ferredoxin thioredoxin reductase beta subunit family. As to quaternary structure, heterodimer of subunit A (variable subunit) and subunit B (catalytic subunit). Heterodimeric FTR forms a complex with ferredoxin and thioredoxin. [4Fe-4S] cluster serves as cofactor.

The protein resides in the plastid. The protein localises to the chloroplast. It catalyses the reaction [thioredoxin]-disulfide + 2 reduced [2Fe-2S]-[ferredoxin] + 2 H(+) = [thioredoxin]-dithiol + 2 oxidized [2Fe-2S]-[ferredoxin]. Catalytic subunit of the ferredoxin-thioredoxin reductase (FTR), which catalyzes the two-electron reduction of thioredoxins by the electrons provided by reduced ferredoxin. This chain is Ferredoxin-thioredoxin reductase catalytic chain, chloroplastic (FTRC), found in Zea mays (Maize).